Here is a 326-residue protein sequence, read N- to C-terminus: Glyoxylate/hydroxypyruvate reductase B (326 aa).

Active-site residues include arginine 237 and glutamate 266. Histidine 285 (proton donor) is an active-site residue.

Belongs to the D-isomer specific 2-hydroxyacid dehydrogenase family. GhrB subfamily. In terms of assembly, homodimer.

It is found in the cytoplasm. The enzyme catalyses glycolate + NADP(+) = glyoxylate + NADPH + H(+). It catalyses the reaction (R)-glycerate + NAD(+) = 3-hydroxypyruvate + NADH + H(+). The catalysed reaction is (R)-glycerate + NADP(+) = 3-hydroxypyruvate + NADPH + H(+). Its function is as follows. Catalyzes the NADPH-dependent reduction of glyoxylate and hydroxypyruvate into glycolate and glycerate, respectively. This chain is Glyoxylate/hydroxypyruvate reductase B, found in Yersinia pestis bv. Antiqua (strain Nepal516).